The chain runs to 338 residues: 1-aminocyclopropane-1-carboxylate deaminase (338 aa).

The residue at position 51 (Lys-51) is an N6-(pyridoxal phosphate)lysine. Ser-78 (nucleophile) is an active-site residue.

The protein belongs to the ACC deaminase/D-cysteine desulfhydrase family. As to quaternary structure, homotrimer. The cofactor is pyridoxal 5'-phosphate.

It catalyses the reaction 1-aminocyclopropane-1-carboxylate + H2O = 2-oxobutanoate + NH4(+). In terms of biological role, catalyzes a cyclopropane ring-opening reaction, the irreversible conversion of 1-aminocyclopropane-1-carboxylate (ACC) to ammonia and alpha-ketobutyrate. Allows growth on ACC as a nitrogen source. This Ralstonia nicotianae (strain ATCC BAA-1114 / GMI1000) (Ralstonia solanacearum) protein is 1-aminocyclopropane-1-carboxylate deaminase.